Here is a 124-residue protein sequence, read N- to C-terminus: UPF0102 protein TM1040_0449 (124 aa).

It belongs to the UPF0102 family.

This is UPF0102 protein TM1040_0449 from Ruegeria sp. (strain TM1040) (Silicibacter sp.).